Consider the following 681-residue polypeptide: PTS system glucose-specific EIICBA component (681 aa).

The PTS EIIC type-1 domain maps to 3–414 (KKLFGQLQRI…LKYKTPGRED (412 aa)). The next 10 membrane-spanning stretches (helical) occupy residues 16 to 36 (LMLP…GTAM), 73 to 93 (MIFA…AAIA), 126 to 146 (ILGI…GALA), 170 to 190 (FVPI…ALIW), 199 to 219 (AFST…FGFI), 273 to 293 (FMQG…LAIY), 303 to 323 (VVAG…ITEP), 328 to 348 (FLFV…LSFL), 355 to 375 (LHLG…GILP), and 383 to 403 (VIPV…FLIV). In terms of domain architecture, PTS EIIB type-1 spans 425–506 (TELPYAVLEA…QQIMNGQVVE (82 aa)). Cysteine 447 (phosphocysteine intermediate; for EIIB activity) is an active-site residue. The region spanning 551-655 (DQVFSEKMMG…SDITPIIVTQ (105 aa)) is the PTS EIIA type-1 domain. The active-site Tele-phosphohistidine intermediate; for EIIA activity is histidine 603.

Its subcellular location is the cell membrane. It catalyses the reaction N(pros)-phospho-L-histidyl-[protein] + D-glucose(out) = D-glucose 6-phosphate(in) + L-histidyl-[protein]. In terms of biological role, the phosphoenolpyruvate-dependent sugar phosphotransferase system (sugar PTS), a major carbohydrate active transport system, catalyzes the phosphorylation of incoming sugar substrates concomitantly with their translocation across the cell membrane. This system is involved in glucose transport. The protein is PTS system glucose-specific EIICBA component (ptsG) of Staphylococcus aureus (strain bovine RF122 / ET3-1).